The primary structure comprises 136 residues: Classical arabinogalactan protein 26 (136 aa).

The N-terminal stretch at 1–21 is a signal peptide; that stretch reads MSVSLFTAFTVLSLCLHTSTS. Positions 38-95 are disordered; it reads APSSFSASTPAMSPDTSPLFPTPGSSEMSPSPSESSIMPTIPSSLSPPNPDAVTPDPL. The span at 40 to 53 shows a compositional bias: polar residues; the sequence is SSFSASTPAMSPDT. The span at 59–81 shows a compositional bias: low complexity; the sequence is TPGSSEMSPSPSESSIMPTIPSS. A lipid anchor (GPI-anchor amidated serine) is attached at S108. Positions 109–136 are cleaved as a propeptide — removed in mature form; sequence SSVCLVSSQLSSLLLVLLMLLLAFCSFF.

This sequence belongs to the classical AGP family. Post-translationally, O-glycosylated on the hydroxyproline residues.

Its subcellular location is the cell membrane. Proteoglycan that seems to be implicated in diverse developmental roles such as differentiation, cell-cell recognition, embryogenesis and programmed cell death. This is Classical arabinogalactan protein 26 (AGP26) from Arabidopsis thaliana (Mouse-ear cress).